The primary structure comprises 477 residues: Bifunctional protein HldE (477 aa).

A ribokinase region spans residues 1 to 320 (MKDSLPAFEK…SLSDTHHSET (320 aa)). 195 to 198 (NLHE) provides a ligand contact to ATP. D264 is an active-site residue. Residues 346 to 477 (MTNGCFDILH…KIIENIMANQ (132 aa)) are cytidylyltransferase.

The protein in the N-terminal section; belongs to the carbohydrate kinase PfkB family. In the C-terminal section; belongs to the cytidylyltransferase family. Homodimer.

The enzyme catalyses D-glycero-beta-D-manno-heptose 7-phosphate + ATP = D-glycero-beta-D-manno-heptose 1,7-bisphosphate + ADP + H(+). It carries out the reaction D-glycero-beta-D-manno-heptose 1-phosphate + ATP + H(+) = ADP-D-glycero-beta-D-manno-heptose + diphosphate. The protein operates within nucleotide-sugar biosynthesis; ADP-L-glycero-beta-D-manno-heptose biosynthesis; ADP-L-glycero-beta-D-manno-heptose from D-glycero-beta-D-manno-heptose 7-phosphate: step 1/4. It functions in the pathway nucleotide-sugar biosynthesis; ADP-L-glycero-beta-D-manno-heptose biosynthesis; ADP-L-glycero-beta-D-manno-heptose from D-glycero-beta-D-manno-heptose 7-phosphate: step 3/4. Catalyzes the phosphorylation of D-glycero-D-manno-heptose 7-phosphate at the C-1 position to selectively form D-glycero-beta-D-manno-heptose-1,7-bisphosphate. In terms of biological role, catalyzes the ADP transfer from ATP to D-glycero-beta-D-manno-heptose 1-phosphate, yielding ADP-D-glycero-beta-D-manno-heptose. This chain is Bifunctional protein HldE, found in Shewanella piezotolerans (strain WP3 / JCM 13877).